The primary structure comprises 111 residues: Succinate dehydrogenase assembly factor 1B, mitochondrial (111 aa).

This sequence belongs to the complex I LYR family. SDHAF1 subfamily. As to quaternary structure, interacts with the iron-sulfur protein subunit within the SDH catalytic dimer.

The protein resides in the mitochondrion matrix. In terms of biological role, plays an essential role in the assembly of succinate dehydrogenase (SDH), an enzyme complex (also referred to as respiratory complex II) that is a component of both the tricarboxylic acid (TCA) cycle and the mitochondrial electron transport chain, and which couples the oxidation of succinate to fumarate with the reduction of ubiquinone (coenzyme Q) to ubiquinol. Promotes maturation of the iron-sulfur protein subunit of the SDH catalytic dimer, protecting it from the deleterious effects of oxidants. May act together with SDHAF3. The polypeptide is Succinate dehydrogenase assembly factor 1B, mitochondrial (Dictyostelium discoideum (Social amoeba)).